We begin with the raw amino-acid sequence, 276 residues long: WIMGHMVNKIEQINEFLDLGANSIEVDIAFDELGYPEYTYHGVPCDCKRYCTKSEKIDDFIEALSAATTPGNPKFRKELTLVVFDLKTGGFDASRMYKSGKAFAELIQFSYWKGSDDAGRAYIVLSLPKLDHYEFIKAFREHFDTSTFKNLLEERVGYDFSGNEDMGLTRVVLNKAGVNDREHVWQGDGITNCILRSLDRVKAAVAIRDSATGYINKVYFWTIQAYSSVRDALNAEVDGIMTNEPDVITNVLKEDAFKDRFRLATYWDNPWETFKR.

Residue H5 is part of the active site. Mg(2+)-binding residues include E25 and D27. H41 serves as the catalytic Nucleophile. 2 cysteine pairs are disulfide-bonded: C45–C51 and C47–C193. Residue D85 participates in Mg(2+) binding.

The protein belongs to the arthropod phospholipase D family. Class II subfamily. It depends on Mg(2+) as a cofactor. In terms of tissue distribution, expressed by the venom gland.

It localises to the secreted. The enzyme catalyses an N-(acyl)-sphingosylphosphocholine = an N-(acyl)-sphingosyl-1,3-cyclic phosphate + choline. It catalyses the reaction an N-(acyl)-sphingosylphosphoethanolamine = an N-(acyl)-sphingosyl-1,3-cyclic phosphate + ethanolamine. The catalysed reaction is a 1-acyl-sn-glycero-3-phosphocholine = a 1-acyl-sn-glycero-2,3-cyclic phosphate + choline. It carries out the reaction a 1-acyl-sn-glycero-3-phosphoethanolamine = a 1-acyl-sn-glycero-2,3-cyclic phosphate + ethanolamine. Functionally, dermonecrotic toxins cleave the phosphodiester linkage between the phosphate and headgroup of certain phospholipids (sphingolipid and lysolipid substrates), forming an alcohol (often choline) and a cyclic phosphate. This toxin acts on sphingomyelin (SM). It may also act on ceramide phosphoethanolamine (CPE), lysophosphatidylcholine (LPC) and lysophosphatidylethanolamine (LPE), but not on lysophosphatidylserine (LPS), and lysophosphatidylglycerol (LPG). It acts by transphosphatidylation, releasing exclusively cyclic phosphate products as second products. Induces dermonecrosis, hemolysis, increased vascular permeability, edema, inflammatory response, and platelet aggregation. The polypeptide is Dermonecrotic toxin LlSicTox-alphaIV2iv (Loxosceles laeta (South American recluse spider)).